Consider the following 362-residue polypeptide: Very-long-chain (3R)-3-hydroxyacyl-CoA dehydratase 3 (362 aa).

N-acetylmethionine is present on Met1. Residues 1–149 (MENQVLTPHV…ETLTSLKKGY (149 aa)) lie on the Cytoplasmic side of the membrane. The CS domain maps to 5 to 94 (VLTPHVYWAQ…KESQWWERLT (90 aa)). Thr7 carries the phosphothreonine modification. Residues 111–136 (LDESDAEMELRAKEEEQLNKLRLESQ) adopt a coiled-coil conformation. 2 positions are modified to phosphoserine: Ser114 and Ser135. Residues 150 to 170 (LFMYNLVQFLGFSWIFVNMTV) traverse the membrane as a helical segment. Over 171 to 189 (RFFILGKESFYDTFHTVAD) the chain is Lumenal. Residues 190-210 (MMYFCQMLAAVESINAAIGVT) form a helical membrane-spanning segment. The Cytoplasmic segment spans residues 211–212 (KS). The chain crosses the membrane as a helical span at residues 213-233 (PVVPSLFQLLGRNFILFIIFG). Residues 234-242 (TMEEMQNKA) are Lumenal-facing. Residues 243-263 (VVFFVFYIWSTVEIFRYPFYM) form a helical membrane-spanning segment. Residues 264 to 280 (LSCIDMDWKVLTWLRYT) lie on the Cytoplasmic side of the membrane. The helical transmembrane segment at 281–301 (VWIPLYPMGCLAEAVSVIQSI) threads the bilayer. Catalysis depends on residues Tyr286 and Glu293. Over 302–325 (PVFNETGRFSFTLPYPVKIKVRFS) the chain is Lumenal. The chain crosses the membrane as a helical span at residues 326 to 346 (FFLQIYLILLFLGLYVNFRYL). Residues 347 to 362 (YKQRRRRFGQKKKKIH) are Cytoplasmic-facing.

It belongs to the very long-chain fatty acids dehydratase HACD family. May interact with enzymes of the ELO family (including ELOVL1); with those enzymes that mediate condensation, the first of the four steps of the reaction cycle responsible for fatty acids elongation, may be part of a larger fatty acids elongase complex. Interacts with RAC1. Associates with internalized insulin receptor/INSR complexes on Golgi/endosomal membranes; HACD3/PTPLAD1 together with ATIC and PRKAA2/AMPK2 is proposed to be part of a signaling network regulating INSR autophosphorylation and endocytosis.

It localises to the endoplasmic reticulum membrane. It catalyses the reaction a very-long-chain (3R)-3-hydroxyacyl-CoA = a very-long-chain (2E)-enoyl-CoA + H2O. The catalysed reaction is (3R)-hydroxyhexadecanoyl-CoA = (2E)-hexadecenoyl-CoA + H2O. The protein operates within lipid metabolism; fatty acid biosynthesis. In terms of biological role, catalyzes the third of the four reactions of the long-chain fatty acids elongation cycle. This endoplasmic reticulum-bound enzymatic process, allows the addition of two carbons to the chain of long- and very long-chain fatty acids/VLCFAs per cycle. This enzyme catalyzes the dehydration of the 3-hydroxyacyl-CoA intermediate into trans-2,3-enoyl-CoA, within each cycle of fatty acid elongation. Thereby, it participates in the production of VLCFAs of different chain lengths that are involved in multiple biological processes as precursors of membrane lipids and lipid mediators. Involved in Rac1-signaling pathways leading to the modulation of gene expression. Promotes insulin receptor/INSR autophosphorylation and is involved in INSR internalization. The chain is Very-long-chain (3R)-3-hydroxyacyl-CoA dehydratase 3 from Bos taurus (Bovine).